The sequence spans 445 residues: Glutamyl-tRNA(Gln) amidotransferase subunit D (445 aa).

The 333-residue stretch at 93 to 425 (SEIKIISTGG…EKIRSLMISN (333 aa)) folds into the Asparaginase/glutaminase domain. Residues threonine 103, threonine 179, aspartate 180, and lysine 258 contribute to the active site.

It belongs to the asparaginase 1 family. GatD subfamily. Heterodimer of GatD and GatE.

The enzyme catalyses L-glutamyl-tRNA(Gln) + L-glutamine + ATP + H2O = L-glutaminyl-tRNA(Gln) + L-glutamate + ADP + phosphate + H(+). Functionally, allows the formation of correctly charged Gln-tRNA(Gln) through the transamidation of misacylated Glu-tRNA(Gln) in organisms which lack glutaminyl-tRNA synthetase. The reaction takes place in the presence of glutamine and ATP through an activated gamma-phospho-Glu-tRNA(Gln). The GatDE system is specific for glutamate and does not act on aspartate. This Saccharolobus islandicus (strain Y.N.15.51 / Yellowstone #2) (Sulfolobus islandicus) protein is Glutamyl-tRNA(Gln) amidotransferase subunit D.